We begin with the raw amino-acid sequence, 266 residues long: Non-structural maintenance of chromosomes element 1 homolog (266 aa).

The tract at residues 1–102 (MQGSTRRAGA…SVSKMATDFA (102 aa)) is interaction with NSMCE3. The RING-type; atypical zinc-finger motif lies at 191–232 (CNICHGLLIQGQSCETCGIRMHLPCVAKYFQSIPEPHCPHCN). The interval 246 to 266 (EKEREAGISKSSRKSLRTRQH) is disordered. Residues 256-266 (SSRKSLRTRQH) are compositionally biased toward basic residues.

The protein belongs to the NSE1 family. Component of the SMC5-SMC6 complex which consists at least of SMC5, SMC6, NSMCE2, NSMCE1, NSMCE4A or EID3 and NSMCE3. NSMCE1, NSMCE4A or EID3 and NSMCE3 probably form a subcomplex that bridges the head domains of the SMC5-SMC6 heterodimer. Interacts with NSMCE3. Post-translationally, ubiquitinated.

The protein localises to the nucleus. The protein resides in the chromosome. It localises to the telomere. It carries out the reaction S-ubiquitinyl-[E2 ubiquitin-conjugating enzyme]-L-cysteine + [acceptor protein]-L-lysine = [E2 ubiquitin-conjugating enzyme]-L-cysteine + N(6)-ubiquitinyl-[acceptor protein]-L-lysine.. Functionally, RING-type zinc finger-containing E3 ubiquitin ligase that assembles with melanoma antigen protein (MAGE) to catalyze the direct transfer of ubiquitin from E2 ubiquitin-conjugating enzyme to a specific substrate. Within MAGE-RING ubiquitin ligase complex, MAGE stimulates and specifies ubiquitin ligase activity likely through recruitment and/or stabilization of the E2 ubiquitin-conjugating enzyme at the E3:substrate complex. Involved in maintenance of genome integrity, DNA damage response and DNA repair. NSMCE3/MAGEG1 and NSMCE1 ubiquitin ligase are components of SMC5-SMC6 complex and may positively regulate homologous recombination-mediated DNA repair. The polypeptide is Non-structural maintenance of chromosomes element 1 homolog (Nsmce1) (Mus musculus (Mouse)).